A 574-amino-acid chain; its full sequence is MNQTRVFLIFAWLMVAALLWMEWGKEKAAANAPVAAATQSVPAARDLDAATPSAANVPAAQAIPQAGAPGKVPATSTTTATPAAAGTAPVVTLTSDVLRLKLDGRSVLDAELLQFPQTKDGTAPVSLLTEDAAHPYNATSGWASEHSPVPGVGGFRAEQPGTTFELAKGQNTLVVPFVWNGPNGVSIRRTFTLERGRYAISIKDEVINKSAAPWNGYVFRKLSRVPTILSRGMTNPDSFSFNGATWYSPQAGYERRAFKDYMDDGGLNRQITGGWIALLQHHFFTAWIPQNDQASLYVLNKDGPRDVAELRGPAFTVAPGQTATTEARLWVGPKLVSLIAKEDVKGLDRVIDYSRFSIMAIIGQGLFWVLSHLHSFLHNWGWAIVGLVVLLRLVLYPLSSAQYKSSAKMRKFQPRLAQLKERYGDDRVKYQQATMELFKKEKINPMGGCLPLLIQMPIFFALYWVLVESVELRQAPWLGWIQDLTARDPHFILPALNIAIMWATQKLTPTPGIDPMQAKMMQFMPLVFGAMMAFVPSGLVLYWVVNGGLNLLIQWWMIRQHGEKPSKIIRANAK.

A run of 6 helical transmembrane segments spans residues 6-26 (VFLI…WGKE), 350-370 (VIDY…FWVL), 376-396 (FLHN…LVLY), 447-467 (GGCL…WVLV), 491-511 (FILP…TPTP), and 525-545 (PLVF…YWVV).

The protein belongs to the OXA1/ALB3/YidC family. Type 1 subfamily. As to quaternary structure, interacts with the Sec translocase complex via SecD. Specifically interacts with transmembrane segments of nascent integral membrane proteins during membrane integration.

Its subcellular location is the cell inner membrane. Functionally, required for the insertion and/or proper folding and/or complex formation of integral membrane proteins into the membrane. Involved in integration of membrane proteins that insert both dependently and independently of the Sec translocase complex, as well as at least some lipoproteins. Aids folding of multispanning membrane proteins. The protein is Membrane protein insertase YidC of Xanthomonas oryzae pv. oryzae (strain KACC10331 / KXO85).